Reading from the N-terminus, the 232-residue chain is Phosphatidylserine decarboxylase proenzyme (232 aa).

S190 serves as the catalytic Schiff-base intermediate with substrate; via pyruvic acid. S190 is subject to Pyruvic acid (Ser); by autocatalysis.

The protein belongs to the phosphatidylserine decarboxylase family. PSD-A subfamily. As to quaternary structure, heterodimer of a large membrane-associated beta subunit and a small pyruvoyl-containing alpha subunit. It depends on pyruvate as a cofactor. In terms of processing, is synthesized initially as an inactive proenzyme. Formation of the active enzyme involves a self-maturation process in which the active site pyruvoyl group is generated from an internal serine residue via an autocatalytic post-translational modification. Two non-identical subunits are generated from the proenzyme in this reaction, and the pyruvate is formed at the N-terminus of the alpha chain, which is derived from the carboxyl end of the proenzyme. The post-translation cleavage follows an unusual pathway, termed non-hydrolytic serinolysis, in which the side chain hydroxyl group of the serine supplies its oxygen atom to form the C-terminus of the beta chain, while the remainder of the serine residue undergoes an oxidative deamination to produce ammonia and the pyruvoyl prosthetic group on the alpha chain.

The protein localises to the cell membrane. The enzyme catalyses a 1,2-diacyl-sn-glycero-3-phospho-L-serine + H(+) = a 1,2-diacyl-sn-glycero-3-phosphoethanolamine + CO2. It participates in phospholipid metabolism; phosphatidylethanolamine biosynthesis; phosphatidylethanolamine from CDP-diacylglycerol: step 2/2. Catalyzes the formation of phosphatidylethanolamine (PtdEtn) from phosphatidylserine (PtdSer). The protein is Phosphatidylserine decarboxylase proenzyme of Rhodopseudomonas palustris (strain BisB18).